The sequence spans 248 residues: MTLRTRFESSDDVGVFSRLTNAYCLVTAGGSQNFYSVFEQELANHIPVVYTSIGGSRVIGRLTCGNRHGLVVPSIATDQELQHLRNSLPDSVKVQRVEERLNALGNCVVCNDHVALIHTDLSRETEEILRDTLQVQTFRTSIAENALVGSYAVVNNKGCMVHPKTPAQDMDEIASLLQVPVVAGTINRGNAAIGSGLVVNDWAAFCGLNTTATEITVVERIFQLRRDLGGDEPNLLQQLRDTLVDELA.

The protein belongs to the eIF-6 family. Monomer. Associates with the 60S ribosomal subunit.

It is found in the cytoplasm. The protein localises to the nucleus. The protein resides in the nucleolus. In terms of biological role, binds to the 60S ribosomal subunit and prevents its association with the 40S ribosomal subunit to form the 80S initiation complex in the cytoplasm. May also be involved in ribosome biogenesis. This chain is Eukaryotic translation initiation factor 6, found in Trypanosoma cruzi (strain CL Brener).